Consider the following 181-residue polypeptide: ATP synthase subunit delta (181 aa).

The protein belongs to the ATPase delta chain family. In terms of assembly, F-type ATPases have 2 components, F(1) - the catalytic core - and F(0) - the membrane proton channel. F(1) has five subunits: alpha(3), beta(3), gamma(1), delta(1), epsilon(1). F(0) has three main subunits: a(1), b(2) and c(10-14). The alpha and beta chains form an alternating ring which encloses part of the gamma chain. F(1) is attached to F(0) by a central stalk formed by the gamma and epsilon chains, while a peripheral stalk is formed by the delta and b chains.

The protein localises to the cell membrane. In terms of biological role, f(1)F(0) ATP synthase produces ATP from ADP in the presence of a proton or sodium gradient. F-type ATPases consist of two structural domains, F(1) containing the extramembraneous catalytic core and F(0) containing the membrane proton channel, linked together by a central stalk and a peripheral stalk. During catalysis, ATP synthesis in the catalytic domain of F(1) is coupled via a rotary mechanism of the central stalk subunits to proton translocation. Its function is as follows. This protein is part of the stalk that links CF(0) to CF(1). It either transmits conformational changes from CF(0) to CF(1) or is implicated in proton conduction. The polypeptide is ATP synthase subunit delta (Mycoplasma mycoides subsp. mycoides SC (strain CCUG 32753 / NCTC 10114 / PG1)).